We begin with the raw amino-acid sequence, 356 residues long: UDP-N-acetylglucosamine--N-acetylmuramyl-(pentapeptide) pyrophosphoryl-undecaprenol N-acetylglucosamine transferase (356 aa).

UDP-N-acetyl-alpha-D-glucosamine is bound by residues T12–G14, N124, R163, S188, I242, A261–E266, and Q287.

Belongs to the glycosyltransferase 28 family. MurG subfamily.

The protein localises to the cell inner membrane. It catalyses the reaction di-trans,octa-cis-undecaprenyl diphospho-N-acetyl-alpha-D-muramoyl-L-alanyl-D-glutamyl-meso-2,6-diaminopimeloyl-D-alanyl-D-alanine + UDP-N-acetyl-alpha-D-glucosamine = di-trans,octa-cis-undecaprenyl diphospho-[N-acetyl-alpha-D-glucosaminyl-(1-&gt;4)]-N-acetyl-alpha-D-muramoyl-L-alanyl-D-glutamyl-meso-2,6-diaminopimeloyl-D-alanyl-D-alanine + UDP + H(+). Its pathway is cell wall biogenesis; peptidoglycan biosynthesis. Cell wall formation. Catalyzes the transfer of a GlcNAc subunit on undecaprenyl-pyrophosphoryl-MurNAc-pentapeptide (lipid intermediate I) to form undecaprenyl-pyrophosphoryl-MurNAc-(pentapeptide)GlcNAc (lipid intermediate II). The protein is UDP-N-acetylglucosamine--N-acetylmuramyl-(pentapeptide) pyrophosphoryl-undecaprenol N-acetylglucosamine transferase of Azotobacter vinelandii (strain DJ / ATCC BAA-1303).